A 470-amino-acid polypeptide reads, in one-letter code: Calcitonin gene-related peptide type 1 receptor (470 aa).

The first 23 residues, 1–23, serve as a signal peptide directing secretion; the sequence is MTASCWTICLFLLGSVTEFIVLA. Topologically, residues 24 to 147 are extracellular; it reads SPEVNESQQQ…HTTEGRRTAM (124 aa). N-linked (GlcNAc...) asparagine glycosylation is found at N28, N74, N126, and N131. Intrachain disulfides connect C56/C82, C73/C113, and C96/C135. Residues 148–172 traverse the membrane as a helical segment; sequence NLFYLALIGHGLSLTSLFISLGIFF. The Cytoplasmic segment spans residues 173–183; sequence HFKSLSCQRIT. The chain crosses the membrane as a helical span at residues 184 to 206; it reads LHKNLFFSFVLNSIITIIWLTAV. Residues 207-217 lie on the Extracellular side of the membrane; the sequence is ANNQELVQQNP. Residues 218 to 246 traverse the membrane as a helical segment; it reads ISCKISQFIHLYIFGCNYFWMLCEGIYLH. Over 247–260 the chain is Cytoplasmic; sequence TLIVVAVFAEKQHL. A helical membrane pass occupies residues 261–281; the sequence is MWYYLLGWGFPLIPATIHAVA. Residues 282–297 are Extracellular-facing; the sequence is RSYYYNDNCWISSNTS. An N-linked (GlcNAc...) asparagine glycan is attached at N295. The helical transmembrane segment at 298 to 322 threads the bilayer; sequence LLYIIHGPICAAMLVNLFFLLNIVR. Over 323-337 the chain is Cytoplasmic; it reads VLITKLKVTHQAKSS. A helical membrane pass occupies residues 338–359; that stretch reads LYMKAVRATLILVPLLGIQYVL. Residues 360-374 are Extracellular-facing; that stretch reads LPYKPSGRVSAEIYD. Residues 375 to 395 traverse the membrane as a helical segment; that stretch reads YIMHILMHYQGLLVATIFCFF. Residues 396–470 are Cytoplasmic-facing; that stretch reads NGEVQAVLRR…AIIKPENPFA (75 aa).

Belongs to the G-protein coupled receptor 2 family.

Its subcellular location is the cell membrane. May function as G protein-coupled receptor for calcitonin-gene-related peptides and adrenomedullin. Specificity may be modulated by accessory proteins. May activate cAMP-dependent pathway. This chain is Calcitonin gene-related peptide type 1 receptor (calcrla), found in Danio rerio (Zebrafish).